The primary structure comprises 164 residues: SsrA-binding protein (164 aa).

Residues 143 to 164 (HDKRQDEKQKSIKKEINSVLKR) are disordered. Positions 145-158 (KRQDEKQKSIKKEI) are enriched in basic and acidic residues.

The protein belongs to the SmpB family.

Its subcellular location is the cytoplasm. Functionally, required for rescue of stalled ribosomes mediated by trans-translation. Binds to transfer-messenger RNA (tmRNA), required for stable association of tmRNA with ribosomes. tmRNA and SmpB together mimic tRNA shape, replacing the anticodon stem-loop with SmpB. tmRNA is encoded by the ssrA gene; the 2 termini fold to resemble tRNA(Ala) and it encodes a 'tag peptide', a short internal open reading frame. During trans-translation Ala-aminoacylated tmRNA acts like a tRNA, entering the A-site of stalled ribosomes, displacing the stalled mRNA. The ribosome then switches to translate the ORF on the tmRNA; the nascent peptide is terminated with the 'tag peptide' encoded by the tmRNA and targeted for degradation. The ribosome is freed to recommence translation, which seems to be the essential function of trans-translation. The protein is SsrA-binding protein of Prochlorococcus marinus (strain MIT 9312).